Reading from the N-terminus, the 191-residue chain is Pyridoxal 5'-phosphate synthase subunit PdxT (191 aa).

An L-glutamine-binding site is contributed by 46–48 (GES). The Nucleophile role is filled by Cys78. Residues Arg105 and 133–134 (IR) each bind L-glutamine. Active-site charge relay system residues include His169 and Glu171.

It belongs to the glutaminase PdxT/SNO family. As to quaternary structure, in the presence of PdxS, forms a dodecamer of heterodimers. Only shows activity in the heterodimer.

It carries out the reaction aldehydo-D-ribose 5-phosphate + D-glyceraldehyde 3-phosphate + L-glutamine = pyridoxal 5'-phosphate + L-glutamate + phosphate + 3 H2O + H(+). The catalysed reaction is L-glutamine + H2O = L-glutamate + NH4(+). The protein operates within cofactor biosynthesis; pyridoxal 5'-phosphate biosynthesis. In terms of biological role, catalyzes the hydrolysis of glutamine to glutamate and ammonia as part of the biosynthesis of pyridoxal 5'-phosphate. The resulting ammonia molecule is channeled to the active site of PdxS. The chain is Pyridoxal 5'-phosphate synthase subunit PdxT from Fervidobacterium nodosum (strain ATCC 35602 / DSM 5306 / Rt17-B1).